The chain runs to 417 residues: Peptide chain release factor subunit 1 (417 aa).

The protein belongs to the eukaryotic release factor 1 family. Heterodimer of two subunits, one of which binds GTP.

The protein resides in the cytoplasm. Functionally, directs the termination of nascent peptide synthesis (translation) in response to the termination codons UAA, UAG and UGA. In Thermoplasma acidophilum (strain ATCC 25905 / DSM 1728 / JCM 9062 / NBRC 15155 / AMRC-C165), this protein is Peptide chain release factor subunit 1 (prf1).